The chain runs to 64 residues: Prokaryotic ubiquitin-like protein Pup (64 aa).

Over residues 1 to 11 (MAQEQTKRGGG) the composition is skewed to basic and acidic residues. The interval 1-37 (MAQEQTKRGGGGDDEDDFASSTAAGQERREKLAEDTD) is disordered. The tract at residues 21–58 (STAAGQERREKLAEDTDDLLDEIDDVLEENAEDFVRAY) is ARC ATPase binding. Positions 24 to 52 (AGQERREKLAEDTDDLLDEIDDVLEENAE) form a coiled coil. At glutamine 64 the chain carries Deamidated glutamine. Glutamine 64 participates in a covalent cross-link: Isoglutamyl lysine isopeptide (Gln-Lys) (interchain with K-? in acceptor proteins).

Belongs to the prokaryotic ubiquitin-like protein family. In terms of assembly, strongly interacts with the proteasome-associated ATPase ARC through a hydrophobic interface; the interacting region of Pup lies in its C-terminal half. There is one Pup binding site per ARC hexamer ring. Post-translationally, is modified by deamidation of its C-terminal glutamine to glutamate by the deamidase Dop, a prerequisite to the subsequent pupylation process.

The protein operates within protein degradation; proteasomal Pup-dependent pathway. Functionally, protein modifier that is covalently attached to lysine residues of substrate proteins, thereby targeting them for proteasomal degradation. The tagging system is termed pupylation. The polypeptide is Prokaryotic ubiquitin-like protein Pup (Mycolicibacterium paratuberculosis (strain ATCC BAA-968 / K-10) (Mycobacterium paratuberculosis)).